Reading from the N-terminus, the 238-residue chain is 2-C-methyl-D-erythritol 4-phosphate cytidylyltransferase (238 aa).

It belongs to the IspD/TarI cytidylyltransferase family. IspD subfamily.

It carries out the reaction 2-C-methyl-D-erythritol 4-phosphate + CTP + H(+) = 4-CDP-2-C-methyl-D-erythritol + diphosphate. Its pathway is isoprenoid biosynthesis; isopentenyl diphosphate biosynthesis via DXP pathway; isopentenyl diphosphate from 1-deoxy-D-xylulose 5-phosphate: step 2/6. Catalyzes the formation of 4-diphosphocytidyl-2-C-methyl-D-erythritol from CTP and 2-C-methyl-D-erythritol 4-phosphate (MEP). The sequence is that of 2-C-methyl-D-erythritol 4-phosphate cytidylyltransferase from Paraburkholderia phytofirmans (strain DSM 17436 / LMG 22146 / PsJN) (Burkholderia phytofirmans).